We begin with the raw amino-acid sequence, 131 residues long: Small ribosomal subunit protein uS8 (131 aa).

It belongs to the universal ribosomal protein uS8 family. As to quaternary structure, part of the 30S ribosomal subunit. Contacts proteins S5 and S12.

Functionally, one of the primary rRNA binding proteins, it binds directly to 16S rRNA central domain where it helps coordinate assembly of the platform of the 30S subunit. The polypeptide is Small ribosomal subunit protein uS8 (Campylobacter jejuni subsp. doylei (strain ATCC BAA-1458 / RM4099 / 269.97)).